A 132-amino-acid polypeptide reads, in one-letter code: Small ribosomal subunit protein uS8 (132 aa).

This sequence belongs to the universal ribosomal protein uS8 family. Part of the 30S ribosomal subunit. Contacts proteins S5 and S12.

Its function is as follows. One of the primary rRNA binding proteins, it binds directly to 16S rRNA central domain where it helps coordinate assembly of the platform of the 30S subunit. The protein is Small ribosomal subunit protein uS8 of Borrelia hermsii (strain HS1 / DAH).